Consider the following 363-residue polypeptide: Peptide chain release factor 2 (363 aa).

Gln251 bears the N5-methylglutamine mark.

The protein belongs to the prokaryotic/mitochondrial release factor family. Methylated by PrmC. Methylation increases the termination efficiency of RF2.

It is found in the cytoplasm. Peptide chain release factor 2 directs the termination of translation in response to the peptide chain termination codons UGA and UAA. The protein is Peptide chain release factor 2 of Helicobacter pylori (strain HPAG1).